Reading from the N-terminus, the 577-residue chain is Arginine--tRNA ligase (577 aa).

The short motif at 122–132 is the 'HIGH' region element; the sequence is PNVAKEMHVGH.

The protein belongs to the class-I aminoacyl-tRNA synthetase family. In terms of assembly, monomer.

Its subcellular location is the cytoplasm. It catalyses the reaction tRNA(Arg) + L-arginine + ATP = L-arginyl-tRNA(Arg) + AMP + diphosphate. The chain is Arginine--tRNA ligase from Salmonella arizonae (strain ATCC BAA-731 / CDC346-86 / RSK2980).